The sequence spans 151 residues: Ribosome maturation factor RimP (151 aa).

The protein belongs to the RimP family.

It localises to the cytoplasm. Required for maturation of 30S ribosomal subunits. In Caldicellulosiruptor saccharolyticus (strain ATCC 43494 / DSM 8903 / Tp8T 6331), this protein is Ribosome maturation factor RimP.